We begin with the raw amino-acid sequence, 853 residues long: Lysine-specific histone demethylase 1A (853 aa).

The tract at residues 1–177 (MLSGKKAAAA…EPEEPSGVEG (177 aa)) is disordered. The span at 7 to 26 (AAAAAAAAAAAAAAGTEAGS) shows a compositional bias: low complexity. The residue at position 60 (Thr60) is a Phosphothreonine. Residues 76 to 97 (AEPPGSAGPQAGPTAGPGSATP) are compositionally biased toward low complexity. Residue Thr105 is modified to Phosphothreonine. Positions 111 to 152 (TSRRKRAKVEYREMDESLANLSEDEYYSEEERNAKAEKEKKL) form a coiled coil. Residues Ser127 and Ser132 each carry the phosphoserine modification. Tyr136 carries the post-translational modification Phosphotyrosine. The residue at position 138 (Ser138) is a Phosphoserine. A compositionally biased stretch (basic and acidic residues) spans 139–152 (EEERNAKAEKEKKL). Residues 161–173 (PEEENESEPEEPS) are compositionally biased toward acidic residues. Residue Ser167 is modified to Phosphoserine. In terms of domain architecture, SWIRM spans 175 to 274 (VEGAAFQSRL…FGIYKRIKPL (100 aa)). FAD-binding positions include Ser290, Glu309, Arg311, Arg317, and 333–334 (MV). The segment at 301–853 (FGMDVTLLEA…GVPAQQSPSM (553 aa)) is demethylase activity. Residues 429 to 515 (IEHWKKIVKT…EEKLQELEAN (87 aa)) adopt a coiled-coil conformation. An N6-acetyllysine mark is found at Lys433, Lys434, and Lys437. Residues Lys443 and Lys470 each participate in a glycyl lysine isopeptide (Lys-Gly) (interchain with G-Cter in SUMO2) cross-link. Lys504 participates in a covalent cross-link: Glycyl lysine isopeptide (Lys-Gly) (interchain with G-Cter in ubiquitin). Ser612 bears the Phosphoserine mark. FAD is bound by residues Glu802 and 811 to 812 (TV). Residue Ser850 is modified to Phosphoserine.

The protein belongs to the flavin monoamine oxidase family. In terms of assembly, component of a histone demethylase complex with RCOR1. Component of a BHC histone deacetylase complex that contains HDAC1, HDAC2, HMG20B, KDM1A, RCOR1 and PHF21A. The BHC complex may also contain ZMYM2, ZNF217, ZMYM3, GSE1 and GTF2I. In the complex, RCOR1 strongly enhances the demethylase activity and protects it from the proteasome while PHF21A inhibits the demethylase activity. Interacts with the androgen receptor (AR). Component of a RCOR/GFI/KDM1A/HDAC complex. Interacts directly with GFI1 and GFI1B. Interacts with SNAI1 (via SNAG domain). Interacts with INSM1. Interacts (via AOD/Tower domain) with JADE2 (via C-terminus). Interacts with ESRRB; co-occupes the core set of ESRRB targets. Interacts with SAMD1 (via WH domain); the interaction modulates KDM1A function. Interacts with RBPJ. Interacts with L3MBTL3. Interacts with ZMYND8. It depends on FAD as a cofactor. Acetylated by KAT8 in epithelial but not in mesenchymal cells, thereby regulating the epithelial-to-mesenchymal transition. Acetylation by KAT8 reduces KDM1A association with nucleosomes, thereby decreasing histone H3 demethylation, leading to transcription activatio of target genes. Post-translationally, polyubiquitinated by JADE2; which leads to its proteasomal degradation. Deubiquitinated by USP38; preventing it from degradation by the 26S proteasome. Ubiquitously expressed.

It is found in the nucleus. The protein localises to the chromosome. It catalyses the reaction N(6),N(6)-dimethyl-L-lysyl(4)-[histone H3] + 2 A + 2 H2O = L-lysyl(4)-[histone H3] + 2 formaldehyde + 2 AH2. With respect to regulation, the N-terminal sequences of INSM1 and SNAI1 compete with histone H3 for the same binding site and thereby inhibit histone demethylation (in vitro). Its function is as follows. Histone demethylase that can demethylate both 'Lys-4' (H3K4me) and 'Lys-9' (H3K9me) of histone H3, thereby acting as a coactivator or a corepressor, depending on the context. Acts by oxidizing the substrate by FAD to generate the corresponding imine that is subsequently hydrolyzed. Acts as a corepressor by mediating demethylation of H3K4me, a specific tag for epigenetic transcriptional activation. Demethylates both mono- (H3K4me1) and di-methylated (H3K4me2) H3K4me. May play a role in the repression of neuronal genes. Alone, it is unable to demethylate H3K4me on nucleosomes and requires the presence of RCOR1/CoREST to achieve such activity. Also acts as a coactivator of androgen receptor (ANDR)-dependent transcription, by being recruited to ANDR target genes and mediating demethylation of H3K9me, a specific tag for epigenetic transcriptional repression. The presence of PRKCB in ANDR-containing complexes, which mediates phosphorylation of 'Thr-6' of histone H3 (H3T6ph), a specific tag that prevents demethylation H3K4me, prevents H3K4me demethylase activity of KDM1A. Demethylates di-methylated 'Lys-370' of p53/TP53 which prevents interaction of p53/TP53 with TP53BP1 and represses p53/TP53-mediated transcriptional activation. Demethylates and stabilizes the DNA methylase DNMT1. Demethylates methylated 'Lys-44' and methylated 'Lys-119' of SOX2. Required for gastrulation during embryogenesis. Component of a RCOR/GFI/KDM1A/HDAC complex that suppresses, via histone deacetylase (HDAC) recruitment, a number of genes implicated in multilineage blood cell development. Facilitates epithelial-to-mesenchymal transition by acting as an effector of SNAI1-mediated transcription repression of epithelial markers E-cadherin/CDH1, CDN7 and KRT8. Required for the maintenance of the silenced state of the SNAI1 target genes E-cadherin/CDH1 and CDN7. Required for the repression of GIPR expression. The polypeptide is Lysine-specific histone demethylase 1A (Mus musculus (Mouse)).